The primary structure comprises 972 residues: MSFFNLDRFRFQRDNAVGIHRKSPDGSNSDKENKQAHQRKADGQFPSGKTSRQVLEDVSSDDEVVRMGKDSASDLQQHINKDMEDKIIKLLEIFPQKSKKDLLEVIENTSTLDGAVAHCLMIYGDEDSGGRKDKGGRSDDDDQPKKKRKIQRSDSSESEDEDSEDEESEEPSREKQEALLKKLKRKLPDIEKEVLRDILKEHDWDYENALGSLLVFSSTDTSSPENQKSKQKSKSSHSKEKTDKITQRPSGSSSLSRWLTAASSHVPEVSSMSALKTQKSALSKSTSKNSSFKRKRGDEMPLNDVSASEDEDEIDSDVDSMSDDQDSEDEDSISGTLQDKIIQFLQDASLDELALISGCSIKKAQKIISLRPFNTWKDVKEQFFKDNGLSIDLVHGCKVVLKERQVVLDLMGRCEKIAQKMTKDVTQVIEAGMGSIKQPKVLNSNLKLQAYQLIGLKWLILLHQHKLSGILADEMGLGKTIQAIAFLAHLYEKGIKGPHLITVPSSTLDNWVRELGLWCPSLKVLIYYGSVEDRKYLRQDILTGLIDFNIIVSTYNLTIGNDHDRSLFRKLKLKYAVFDEGHMLKNMNSLRYRHLMTINAEHRLLLTGTPLQNNLLELMSLLNFIMPSMFSSSTSQISKMFSTRSSEEESSFHKDRIAQARLIMKPFILRRVKSEVLKELPPKMEKIEMCPMSDAQHKLYDILFKRLKKTPNGDKRELCNVMMQLRKMANHPLLHRQYYTSDKLAAMSKAMLKEPTHYDADPALIQEDMEVMSDFELHNLCREYSSISGFQLEKALILDSGKFALLTKTLAKLKEKGDRVVLFSQFTMMLDIVEILLKHLDHQYVRLDGSTPMAERIGLIDKYNTNPEIFVFLLSTRAGGQGINLASANTVILHDIDCNPFNDKQAEDRCHRMGQTRTVQVIKLISKDSIEDCMLRVGQEKLKLEQDMTTDEGEDGAITEQMAELLKVSLGL.

Disordered stretches follow at residues 15-76 (NAVG…SDLQ), 125-177 (DEDS…EKQE), and 217-333 (SSTD…EDSI). 2 stretches are compositionally biased toward basic and acidic residues: residues 22 to 42 (KSPD…RKAD) and 63 to 72 (EVVRMGKDSA). One can recognise a CUE 1 domain in the interval 82-127 (DMEDKIIKLLEIFPQKSKKDLLEVIENTSTLDGAVAHCLMIYGDED). Residues 128–138 (SGGRKDKGGRS) show a composition bias toward basic and acidic residues. The span at 156-169 (SESEDEDSEDEESE) shows a compositional bias: acidic residues. One can recognise a CUE 2 domain in the interval 175-218 (KQEALLKKLKRKLPDIEKEVLRDILKEHDWDYENALGSLLVFSS). Residues 237-246 (HSKEKTDKIT) are compositionally biased toward basic and acidic residues. The segment covering 247 to 263 (QRPSGSSSLSRWLTAAS) has biased composition (polar residues). Low complexity predominate over residues 279-290 (KSALSKSTSKNS). The segment covering 307–332 (ASEDEDEIDSDVDSMSDDQDSEDEDS) has biased composition (acidic residues). One can recognise a Helicase ATP-binding domain in the interval 460-628 (ILLHQHKLSG…MSLLNFIMPS (169 aa)). 473–480 (DEMGLGKT) is an ATP binding site. Residues 579–582 (DEGH) carry the DEGH box motif. A Helicase C-terminal domain is found at 805 to 966 (LLTKTLAKLK…AITEQMAELL (162 aa)).

This sequence belongs to the SNF2/RAD54 helicase family.

The protein resides in the nucleus. It localises to the chromosome. The catalysed reaction is ATP + H2O = ADP + phosphate + H(+). Functionally, DNA helicase that possesses intrinsic ATP-dependent nucleosome-remodeling activity and is both required for DNA repair and heterochromatin organization. Promotes DNA end resection of double-strand breaks (DSBs) following DNA damage: probably acts by weakening histone DNA interactions in nucleosomes flanking DSBs. Required for the restoration of heterochromatin organization after replication. This Danio rerio (Zebrafish) protein is SWI/SNF-related matrix-associated actin-dependent regulator of chromatin subfamily A containing DEAD/H box 1A (smarcad1a).